A 392-amino-acid polypeptide reads, in one-letter code: Tyrosine--tRNA ligase (392 aa).

The 'HIGH' region motif lies at 41–50; sequence PTAPDLHLGH. The 'KMSKS' region motif lies at 225-229; that stretch reads KMSKS. Lys228 lines the ATP pocket. The S4 RNA-binding domain occupies 330–390; that stretch reads LRAVDFLVKI…VGKKKFYRVV (61 aa).

The protein belongs to the class-I aminoacyl-tRNA synthetase family. TyrS type 2 subfamily. Homodimer.

Its subcellular location is the cytoplasm. It catalyses the reaction tRNA(Tyr) + L-tyrosine + ATP = L-tyrosyl-tRNA(Tyr) + AMP + diphosphate + H(+). In terms of biological role, catalyzes the attachment of tyrosine to tRNA(Tyr) in a two-step reaction: tyrosine is first activated by ATP to form Tyr-AMP and then transferred to the acceptor end of tRNA(Tyr). The protein is Tyrosine--tRNA ligase of Aquifex aeolicus (strain VF5).